The primary structure comprises 104 residues: MIRKAFVMQVNPDAHEEYQRRHNPIWLELEAVLKSHGAHNYAIYLDKARNLLFATVEIESEERWNAVASTDVCQRWWKYMTDVMPANPDNSPVSSELQEVFYLP.

Y18 serves as a coordination point for substrate. Catalysis depends on H22, which acts as the Proton donor. Substrate contacts are provided by residues Y41 and 76-77 (WW).

Belongs to the rhamnose mutarotase family. Homodimer.

It localises to the cytoplasm. It carries out the reaction alpha-L-rhamnose = beta-L-rhamnose. It participates in carbohydrate metabolism; L-rhamnose metabolism. Its function is as follows. Involved in the anomeric conversion of L-rhamnose. The polypeptide is L-rhamnose mutarotase (Escherichia coli O7:K1 (strain IAI39 / ExPEC)).